A 182-amino-acid chain; its full sequence is Isopentenyl-diphosphate Delta-isomerase (182 aa).

Mn(2+) contacts are provided by His25 and His32. The 135-residue stretch at 30 to 164 (LLHLAFSSWL…PWAFSPWMVM (135 aa)) folds into the Nudix hydrolase domain. The active site involves Cys67. A Mn(2+)-binding site is contributed by His69. Glu87 contacts Mg(2+). 2 residues coordinate Mn(2+): Glu114 and Glu116. Residue Glu116 is part of the active site.

It belongs to the IPP isomerase type 1 family. As to quaternary structure, homodimer. Requires Mg(2+) as cofactor. Mn(2+) is required as a cofactor.

The protein resides in the cytoplasm. The catalysed reaction is isopentenyl diphosphate = dimethylallyl diphosphate. The protein operates within isoprenoid biosynthesis; dimethylallyl diphosphate biosynthesis; dimethylallyl diphosphate from isopentenyl diphosphate: step 1/1. In terms of biological role, catalyzes the 1,3-allylic rearrangement of the homoallylic substrate isopentenyl (IPP) to its highly electrophilic allylic isomer, dimethylallyl diphosphate (DMAPP). This chain is Isopentenyl-diphosphate Delta-isomerase, found in Escherichia coli (strain SMS-3-5 / SECEC).